Reading from the N-terminus, the 247-residue chain is MNERITILSAYSFVNIIEPANLIPKLLLVGKKKYIRGTILLANEGFNSSFSGSYENVNIVLKQLIALTGSKDVNVKINYSPVHPFQKLKVRLKREIIAMNVKDLNVDVFKGHYIEPKDWDEFITKQNVILIDTRNEYEIDIGTFKSAINPRTETFKQFPAWVQQNHALLQGKKIAMFCTGGIRCEKSTSLLKSIGYNEVYHLKGGILQYLEDTHNKNNLWQGKCFVFDDRRAVADDLYPAEGYWLHR.

The 95-residue stretch at 124–218 folds into the Rhodanese domain; sequence TKQNVILIDT…YLEDTHNKNN (95 aa). The active-site Cysteine persulfide intermediate is the Cys-178.

Belongs to the TrhO family.

It catalyses the reaction uridine(34) in tRNA + AH2 + O2 = 5-hydroxyuridine(34) in tRNA + A + H2O. Its function is as follows. Catalyzes oxygen-dependent 5-hydroxyuridine (ho5U) modification at position 34 in tRNAs. The chain is tRNA uridine(34) hydroxylase from Rickettsia prowazekii (strain Madrid E).